Consider the following 350-residue polypeptide: Hydroxymethylglutaryl-CoA synthase (350 aa).

Asp-30 contributes to the (3S)-3-hydroxy-3-methylglutaryl-CoA binding site. The active-site Proton donor/acceptor is the Glu-82. 4 residues coordinate (3S)-3-hydroxy-3-methylglutaryl-CoA: Cys-114, Ser-155, Thr-203, and His-236. Residue Cys-114 is the Acyl-thioester intermediate of the active site. The Proton donor/acceptor role is filled by His-236. Arg-241 is a CoA binding site. Arg-245, Asn-268, and Ser-298 together coordinate (3S)-3-hydroxy-3-methylglutaryl-CoA.

Belongs to the thiolase-like superfamily. Archaeal HMG-CoA synthase family. As to quaternary structure, interacts with acetoacetyl-CoA thiolase that catalyzes the precedent step in the pathway and with a DUF35 protein. The acetoacetyl-CoA thiolase/HMG-CoA synthase complex channels the intermediate via a fused CoA-binding site, which allows for efficient coupling of the endergonic thiolase reaction with the exergonic HMGCS reaction.

The enzyme catalyses acetoacetyl-CoA + acetyl-CoA + H2O = (3S)-3-hydroxy-3-methylglutaryl-CoA + CoA + H(+). Its pathway is metabolic intermediate biosynthesis; (R)-mevalonate biosynthesis; (R)-mevalonate from acetyl-CoA: step 2/3. Its function is as follows. Catalyzes the condensation of acetyl-CoA with acetoacetyl-CoA to form 3-hydroxy-3-methylglutaryl-CoA (HMG-CoA). Functions in the mevalonate (MVA) pathway leading to isopentenyl diphosphate (IPP), a key precursor for the biosynthesis of isoprenoid compounds that are building blocks of archaeal membrane lipids. The protein is Hydroxymethylglutaryl-CoA synthase of Pyrobaculum aerophilum (strain ATCC 51768 / DSM 7523 / JCM 9630 / CIP 104966 / NBRC 100827 / IM2).